We begin with the raw amino-acid sequence, 140 residues long: ATP synthase epsilon chain (140 aa).

The protein belongs to the ATPase epsilon chain family. In terms of assembly, F-type ATPases have 2 components, CF(1) - the catalytic core - and CF(0) - the membrane proton channel. CF(1) has five subunits: alpha(3), beta(3), gamma(1), delta(1), epsilon(1). CF(0) has three main subunits: a, b and c.

It localises to the cell inner membrane. Produces ATP from ADP in the presence of a proton gradient across the membrane. The chain is ATP synthase epsilon chain from Xylella fastidiosa (strain Temecula1 / ATCC 700964).